A 325-amino-acid chain; its full sequence is MITDRQLSILNAIVEDYVDFGQPVGSKTLIERHNLNVSPATIRNEMKQLEDLNYIEKTHSSSGRSPSQLGFRYYVNRLLEQTSHQKTNKLRRLNQLLVENQYDVSSALTYFADELSNISQYTTLVVHPNHKQDIINNVHLIRANPNLVIMVIVFSSGHVEHVHLASDIPFSNDKLNTISNFVTNKLTEFNQNLQDDIVSFVQSEQEEIFINKLLNTMNNHISNQSNSIYMGGKVKLIDALNESNVSSIQPILQYIESNRIAELLQDISSPNINVKIGNEIDDSLSDISIVTSQYHFDETLKGQIAVIGPTAMHYQNVIQLLNRIW.

Belongs to the HrcA family.

Functionally, negative regulator of class I heat shock genes (grpE-dnaK-dnaJ and groELS operons). Prevents heat-shock induction of these operons. This Staphylococcus aureus (strain MRSA252) protein is Heat-inducible transcription repressor HrcA.